Reading from the N-terminus, the 186-residue chain is PRA1 family protein G2 (186 aa).

4 helical membrane passes run 66-86 (YFFV…LITA), 87-107 (SPVA…FHFF), 119-139 (VGDR…IWFT), and 142-162 (AVNL…HAVF).

Belongs to the PRA1 family. In terms of tissue distribution, expressed in roots and trichomes.

It localises to the endoplasmic reticulum membrane. Functionally, may be involved in both secretory and endocytic intracellular trafficking in the endosomal/prevacuolar compartments. This is PRA1 family protein G2 (PRA1G2) from Arabidopsis thaliana (Mouse-ear cress).